Reading from the N-terminus, the 599-residue chain is Sulfite reductase [NADPH] flavoprotein alpha-component (599 aa).

Residues 64 to 202 (ITIISASQTG…AASEWRARVV (139 aa)) enclose the Flavodoxin-like domain. Residues 70 to 75 (SQTGNA), 117 to 120 (STQG), and 153 to 162 (LGDSSYEFFC) each bind FMN. In terms of domain architecture, FAD-binding FR-type spans 234 to 448 (DAPLAASLSV…IEHNDNFRLP (215 aa)). FAD is bound by residues Thr322, Ala356, 386–389 (RLYS), 404–406 (TVG), Tyr410, and 419–422 (GGAS). NADP(+) contacts are provided by residues 519–520 (SR), 525–529 (KIYVQ), and Asp561. Residue Tyr599 coordinates FAD.

This sequence belongs to the NADPH-dependent sulphite reductase flavoprotein subunit CysJ family. The protein in the N-terminal section; belongs to the flavodoxin family. It in the C-terminal section; belongs to the flavoprotein pyridine nucleotide cytochrome reductase family. Alpha(8)-beta(8). The alpha component is a flavoprotein, the beta component is a hemoprotein. Requires FAD as cofactor. It depends on FMN as a cofactor.

It catalyses the reaction hydrogen sulfide + 3 NADP(+) + 3 H2O = sulfite + 3 NADPH + 4 H(+). The protein operates within sulfur metabolism; hydrogen sulfide biosynthesis; hydrogen sulfide from sulfite (NADPH route): step 1/1. In terms of biological role, component of the sulfite reductase complex that catalyzes the 6-electron reduction of sulfite to sulfide. This is one of several activities required for the biosynthesis of L-cysteine from sulfate. The flavoprotein component catalyzes the electron flow from NADPH -&gt; FAD -&gt; FMN to the hemoprotein component. This is Sulfite reductase [NADPH] flavoprotein alpha-component from Escherichia coli O6:H1 (strain CFT073 / ATCC 700928 / UPEC).